Consider the following 101-residue polypeptide: Non-histone chromosomal protein HMG-14 (101 aa).

The disordered stretch occupies residues 1–101; it reads MPKRKVSSAE…EAEEKEAKSD (101 aa). Position 7 is an ADP-ribosylserine (Ser-7). Phosphoserine is present on Ser-8. Lys-14 carries the N6-acetyllysine modification. Ser-21 carries the phosphoserine modification. Position 25 is an ADP-ribosylserine; alternate (Ser-25). Ser-25 carries the phosphoserine; alternate modification. Lys-27 carries the N6-acetyllysine modification. Composition is skewed to basic and acidic residues over residues 33 to 51 and 70 to 86; these read VETK…DKKV and ETKE…KNEE. At Thr-82 the chain carries Phosphothreonine. Lys-83 is subject to N6-acetyllysine. 3 positions are modified to phosphoserine: Ser-87, Ser-90, and Ser-100.

It belongs to the HMGN family. Interacts with transcriptional regulator SEHBP. In terms of processing, phosphorylation on Ser-21 and Ser-25 weakens binding to nucleosomes and increases the rate of H3 phosphorylation.

Its subcellular location is the nucleus. Its function is as follows. Binds to the inner side of the nucleosomal DNA thus altering the interaction between the DNA and the histone octamer. May be involved in the process which maintains transcribable genes in a unique chromatin conformation. Inhibits the phosphorylation of nucleosomal histones H3 and H2A by RPS6KA5/MSK1 and RPS6KA3/RSK2. The protein is Non-histone chromosomal protein HMG-14 (HMGN1) of Bos taurus (Bovine).